A 461-amino-acid polypeptide reads, in one-letter code: Bifunctional protein GlmU (461 aa).

Positions M1–K235 are pyrophosphorylase. UDP-N-acetyl-alpha-D-glucosamine is bound by residues L13–G16, K27, Q80, G85–T86, Y108–D110, G146, E161, and N176. D110 contributes to the Mg(2+) binding site. A linker region spans residues A236–A256. The interval G257–G461 is N-acetyltransferase. UDP-N-acetyl-alpha-D-glucosamine-binding residues include R322 and K340. Catalysis depends on H352, which acts as the Proton acceptor. Y355 and N366 together coordinate UDP-N-acetyl-alpha-D-glucosamine. Acetyl-CoA contacts are provided by residues A369, N375–Y376, S394, S412, and R429.

This sequence in the N-terminal section; belongs to the N-acetylglucosamine-1-phosphate uridyltransferase family. In the C-terminal section; belongs to the transferase hexapeptide repeat family. In terms of assembly, homotrimer. The cofactor is Mg(2+).

It is found in the cytoplasm. The enzyme catalyses alpha-D-glucosamine 1-phosphate + acetyl-CoA = N-acetyl-alpha-D-glucosamine 1-phosphate + CoA + H(+). It carries out the reaction N-acetyl-alpha-D-glucosamine 1-phosphate + UTP + H(+) = UDP-N-acetyl-alpha-D-glucosamine + diphosphate. The protein operates within nucleotide-sugar biosynthesis; UDP-N-acetyl-alpha-D-glucosamine biosynthesis; N-acetyl-alpha-D-glucosamine 1-phosphate from alpha-D-glucosamine 6-phosphate (route II): step 2/2. It participates in nucleotide-sugar biosynthesis; UDP-N-acetyl-alpha-D-glucosamine biosynthesis; UDP-N-acetyl-alpha-D-glucosamine from N-acetyl-alpha-D-glucosamine 1-phosphate: step 1/1. It functions in the pathway bacterial outer membrane biogenesis; LPS lipid A biosynthesis. Functionally, catalyzes the last two sequential reactions in the de novo biosynthetic pathway for UDP-N-acetylglucosamine (UDP-GlcNAc). The C-terminal domain catalyzes the transfer of acetyl group from acetyl coenzyme A to glucosamine-1-phosphate (GlcN-1-P) to produce N-acetylglucosamine-1-phosphate (GlcNAc-1-P), which is converted into UDP-GlcNAc by the transfer of uridine 5-monophosphate (from uridine 5-triphosphate), a reaction catalyzed by the N-terminal domain. This chain is Bifunctional protein GlmU, found in Hyphomonas neptunium (strain ATCC 15444).